The chain runs to 96 residues: UPF0235 protein YggU (96 aa).

It belongs to the UPF0235 family.

In Salmonella agona (strain SL483), this protein is UPF0235 protein YggU.